We begin with the raw amino-acid sequence, 424 residues long: Histidine--tRNA ligase (424 aa).

It belongs to the class-II aminoacyl-tRNA synthetase family. As to quaternary structure, homodimer.

It is found in the cytoplasm. It catalyses the reaction tRNA(His) + L-histidine + ATP = L-histidyl-tRNA(His) + AMP + diphosphate + H(+). In Escherichia coli (strain SE11), this protein is Histidine--tRNA ligase.